The sequence spans 217 residues: Small ribosomal subunit protein uS3 (217 aa).

The KH type-2 domain maps to 38-106; the sequence is IRKYIDNALQ…KVHINVIEIK (69 aa).

This sequence belongs to the universal ribosomal protein uS3 family. As to quaternary structure, part of the 30S ribosomal subunit. Forms a tight complex with proteins S10 and S14.

Functionally, binds the lower part of the 30S subunit head. Binds mRNA in the 70S ribosome, positioning it for translation. This Staphylococcus saprophyticus subsp. saprophyticus (strain ATCC 15305 / DSM 20229 / NCIMB 8711 / NCTC 7292 / S-41) protein is Small ribosomal subunit protein uS3.